The primary structure comprises 559 residues: Urocanate hydratase (559 aa).

NAD(+) is bound by residues 54–55 (GG), glutamine 132, 178–180 (GMG), glutamate 198, arginine 203, 244–245 (NA), 265–269 (QTSAH), 275–276 (YL), and tyrosine 324. The active site involves cysteine 412. Glycine 494 serves as a coordination point for NAD(+).

This sequence belongs to the urocanase family. Requires NAD(+) as cofactor.

The protein localises to the cytoplasm. The enzyme catalyses 4-imidazolone-5-propanoate = trans-urocanate + H2O. It functions in the pathway amino-acid degradation; L-histidine degradation into L-glutamate; N-formimidoyl-L-glutamate from L-histidine: step 2/3. Functionally, catalyzes the conversion of urocanate to 4-imidazolone-5-propionate. This is Urocanate hydratase from Azotobacter vinelandii (strain DJ / ATCC BAA-1303).